The sequence spans 571 residues: uncharacterized protein (571 aa).

This is an uncharacterized protein from Methanocaldococcus jannaschii (strain ATCC 43067 / DSM 2661 / JAL-1 / JCM 10045 / NBRC 100440) (Methanococcus jannaschii).